We begin with the raw amino-acid sequence, 1343 residues long: DNA-directed RNA polymerase subunit beta (1343 aa).

It belongs to the RNA polymerase beta chain family. The RNAP catalytic core consists of 2 alpha, 1 beta, 1 beta' and 1 omega subunit. When a sigma factor is associated with the core the holoenzyme is formed, which can initiate transcription.

It catalyses the reaction RNA(n) + a ribonucleoside 5'-triphosphate = RNA(n+1) + diphosphate. Its function is as follows. DNA-dependent RNA polymerase catalyzes the transcription of DNA into RNA using the four ribonucleoside triphosphates as substrates. The chain is DNA-directed RNA polymerase subunit beta from Shewanella woodyi (strain ATCC 51908 / MS32).